The chain runs to 550 residues: Methyl-coenzyme M reductase subunit alpha (550 aa).

Residue glutamine 147 coordinates coenzyme F430. Coenzyme B contacts are provided by residues arginine 225, lysine 256–histidine 257, and arginine 270. Histidine 257 carries the pros-methylhistidine modification. A 5-methylarginine modification is found at arginine 271. A coenzyme M-binding site is contributed by tyrosine 333. The residue at position 400 (glutamine 400) is a 2-methylglutamine. Tyrosine 444 provides a ligand contact to coenzyme M. Glycine 445 carries the post-translational modification 1-thioglycine. Aspartate 450 carries the post-translational modification (Z)-2,3-didehydroaspartate. Cysteine 452 carries the post-translational modification S-methylcysteine.

This sequence belongs to the methyl-coenzyme M reductase alpha subunit family. MCR is a hexamer of two alpha, two beta, and two gamma chains, forming a dimer of heterotrimers. Coenzyme F430 serves as cofactor. Post-translationally, the alpha subunit contains six modified amino acids near the active site region. Is methylated on His-257, Arg-271, Gln-400 and Cys-452, probably by the action of specific S-adenosylmethionine-dependent methyltransferases. Also contains a thioglycine at position 445, forming a thiopeptide bond. Contains a didehydroaspartate residue at position 450. The methylation on C5 of Arg-271 is a post-translational methylation not essential in vivo, but which plays a role for the stability and structural integrity of MCR.

It is found in the cytoplasm. The enzyme catalyses coenzyme B + methyl-coenzyme M = methane + coenzyme M-coenzyme B heterodisulfide. The protein operates within one-carbon metabolism; methyl-coenzyme M reduction; methane from methyl-coenzyme M: step 1/1. Its function is as follows. Component of the methyl-coenzyme M reductase (MCR) I that catalyzes the reductive cleavage of methyl-coenzyme M (CoM-S-CH3 or 2-(methylthio)ethanesulfonate) using coenzyme B (CoB or 7-mercaptoheptanoylthreonine phosphate) as reductant which results in the production of methane and the mixed heterodisulfide of CoB and CoM (CoM-S-S-CoB). This is the final step in methanogenesis. This Methanothermobacter thermautotrophicus (strain ATCC 29096 / DSM 1053 / JCM 10044 / NBRC 100330 / Delta H) (Methanobacterium thermoautotrophicum) protein is Methyl-coenzyme M reductase subunit alpha (mcrA).